The primary structure comprises 100 residues: uncharacterized protein (100 aa).

Its subcellular location is the mitochondrion. This is an uncharacterized protein from Arabidopsis thaliana (Mouse-ear cress).